The chain runs to 339 residues: MYALIRKALFSLDAEQAHDLTIKTLKTLGRSPFNPLLKTLFACPTGSPKTIMGLHFKNPIGLAAGADKNGEAIEGFAAMGFGFIEVGTVTPLAQEGNPKPRQFRLPEAEGIINRNGFNNYGIDYLIENVKHANYDGILGINIGKNTFTSVENGKADYLICLNKAYHYADYITINISSPNSPGLRQLQYGEALEDLLQGVKARQKDLAEQYQKYVPIAVKIAPDLTEGEVVQIADTLQRHKMDAVIATNTTISRDTVSGLQNAEQQGGLSGKPLQQKSTEIIARLHQELKGQIPIIGSGGIDSVANAQEKIKAGAELLQLYSGLIYHGPHLIKQLVQQIK.

Residues 64–68 and Thr-88 each bind FMN; that span reads AGADK. A substrate-binding site is contributed by Lys-68. Position 113–117 (113–117) interacts with substrate; the sequence is NRNGF. 2 residues coordinate FMN: Asn-141 and Asn-174. Asn-174 is a substrate binding site. The Nucleophile role is filled by Ser-177. Asn-179 contributes to the substrate binding site. Positions 219 and 247 each coordinate FMN. Position 248-249 (248-249) interacts with substrate; sequence NT. FMN contacts are provided by residues Gly-270, Gly-299, and 320–321; that span reads YS.

The protein belongs to the dihydroorotate dehydrogenase family. Type 2 subfamily. In terms of assembly, monomer. It depends on FMN as a cofactor.

Its subcellular location is the cell membrane. The enzyme catalyses (S)-dihydroorotate + a quinone = orotate + a quinol. Its pathway is pyrimidine metabolism; UMP biosynthesis via de novo pathway; orotate from (S)-dihydroorotate (quinone route): step 1/1. Functionally, catalyzes the conversion of dihydroorotate to orotate with quinone as electron acceptor. The chain is Dihydroorotate dehydrogenase (quinone) (pyrD) from Pasteurella multocida (strain Pm70).